The following is an 89-amino-acid chain: Small ribosomal subunit protein uS14 (89 aa).

The protein belongs to the universal ribosomal protein uS14 family. Part of the 30S ribosomal subunit. Contacts proteins S3 and S10.

In terms of biological role, binds 16S rRNA, required for the assembly of 30S particles and may also be responsible for determining the conformation of the 16S rRNA at the A site. This Streptococcus pneumoniae serotype 2 (strain D39 / NCTC 7466) protein is Small ribosomal subunit protein uS14.